The chain runs to 1133 residues: Fas-binding factor 1 (1133 aa).

Disordered regions lie at residues 89–198 (LGLK…TPIR) and 211–544 (IMAT…VPVQ). Residues 102–113 (AAKDPGKGELPN) show a composition bias toward basic and acidic residues. Residues 125–134 (KKSLPSPSSS) show a composition bias toward low complexity. Phosphoserine is present on S142. The segment covering 165–182 (PPVTQSKTASDKSPSTVR) has biased composition (polar residues). Basic and acidic residues-rich tracts occupy residues 221–245 (PKAE…DELL) and 259–276 (TGEH…RPQD). Positions 277–286 (SEDMWGDEDF) are enriched in acidic residues. The segment covering 295–310 (VVSSEGRQSRRQSVSR) has biased composition (low complexity). Over residues 325-336 (SKQSPPMASSPI) the composition is skewed to polar residues. A compositionally biased stretch (basic and acidic residues) spans 415–424 (ASKEEKEDWL). Residues 459–469 (SGSQPLTSTQG) show a composition bias toward polar residues. Positions 473–482 (AAAGGSSGTT) are enriched in low complexity. Coiled-coil stretches lie at residues 577-727 (AELQ…VDAA) and 773-870 (IRQR…EEQK). K960 is covalently cross-linked (Glycyl lysine isopeptide (Lys-Gly) (interchain with G-Cter in SUMO2)). The interval 1062-1085 (AASSQSALMPPAPTTRWCSQPPTG) is disordered.

May interact with FAS cytoplasmic domain. Interacts with PARD3. Interacts with TRAPPC14. As to expression, present in various epithelial cells (at protein level).

Its subcellular location is the cytoplasm. The protein localises to the cytoskeleton. The protein resides in the microtubule organizing center. It localises to the centrosome. It is found in the centriole. Its subcellular location is the spindle pole. The protein localises to the cell junction. In terms of biological role, keratin-binding protein required for epithelial cell polarization. Involved in apical junction complex (AJC) assembly via its interaction with PARD3. Required for ciliogenesis. This Homo sapiens (Human) protein is Fas-binding factor 1 (FBF1).